We begin with the raw amino-acid sequence, 379 residues long: Protein OSCP1 (379 aa).

As to expression, predominantly expressed in testis.

The protein localises to the basal cell membrane. In terms of biological role, may be involved in drug clearance in the placenta. The protein is Protein OSCP1 (Oscp1) of Rattus norvegicus (Rat).